We begin with the raw amino-acid sequence, 196 residues long: Peptide deformylase (196 aa).

Fe cation contacts are provided by cysteine 105 and histidine 147. Residue glutamate 148 is part of the active site. Histidine 151 is a Fe cation binding site.

This sequence belongs to the polypeptide deformylase family. Fe(2+) serves as cofactor.

The enzyme catalyses N-terminal N-formyl-L-methionyl-[peptide] + H2O = N-terminal L-methionyl-[peptide] + formate. Removes the formyl group from the N-terminal Met of newly synthesized proteins. Requires at least a dipeptide for an efficient rate of reaction. N-terminal L-methionine is a prerequisite for activity but the enzyme has broad specificity at other positions. The protein is Peptide deformylase of Christiangramia forsetii (strain DSM 17595 / CGMCC 1.15422 / KT0803) (Gramella forsetii).